Consider the following 311-residue polypeptide: Glycerol-3-phosphate dehydrogenase [NAD(P)+] (311 aa).

4 residues coordinate NADPH: tryptophan 12, arginine 31, arginine 32, and lysine 96. Residues lysine 96, glycine 124, and serine 126 each coordinate sn-glycerol 3-phosphate. Alanine 128 serves as a coordination point for NADPH. 5 residues coordinate sn-glycerol 3-phosphate: lysine 178, aspartate 231, serine 241, arginine 242, and asparagine 243. Catalysis depends on lysine 178, which acts as the Proton acceptor. Arginine 242 contacts NADPH. NADPH contacts are provided by valine 266 and glutamate 268.

Belongs to the NAD-dependent glycerol-3-phosphate dehydrogenase family.

Its subcellular location is the cytoplasm. It carries out the reaction sn-glycerol 3-phosphate + NAD(+) = dihydroxyacetone phosphate + NADH + H(+). The enzyme catalyses sn-glycerol 3-phosphate + NADP(+) = dihydroxyacetone phosphate + NADPH + H(+). It participates in membrane lipid metabolism; glycerophospholipid metabolism. Its function is as follows. Catalyzes the reduction of the glycolytic intermediate dihydroxyacetone phosphate (DHAP) to sn-glycerol 3-phosphate (G3P), the key precursor for phospholipid synthesis. In Helicobacter hepaticus (strain ATCC 51449 / 3B1), this protein is Glycerol-3-phosphate dehydrogenase [NAD(P)+].